Consider the following 366-residue polypeptide: Sigma54-dependent transcriptional activator SfnR (366 aa).

A Sigma-54 factor interaction domain is found at 21 to 250 (QVFEDPRSQA…LENVIHHSLL (230 aa)). ATP is bound by residues 49–56 (GETGTGKE) and 112–121 (ANGGTLFLDE).

Functionally, involved in the dimethyl sulfide degradation pathway. Activates the expression of sfnG and sfnF. The protein is Sigma54-dependent transcriptional activator SfnR of Pseudomonas putida (Arthrobacter siderocapsulatus).